The sequence spans 200 residues: Eukaryotic translation initiation factor isoform 4E (200 aa).

Positions 1-22 are disordered; it reads MATEAPIEATEVPPASATETVA. Residues 44 to 49, lysine 76, and 94 to 95 each bind mRNA; these read QGAAWG and WE. Residues cysteine 99 and cysteine 138 are joined by a disulfide bond. Residues 145–150 and 189–192 contribute to the mRNA site; these read RRSQDK and KRER.

The protein belongs to the eukaryotic initiation factor 4E family. In terms of assembly, EIF4F is a multi-subunit complex, the composition of which varies with external and internal environmental conditions. It is composed of at least EIF4A, EIF4E and EIF4G. EIF4E is also known to interact with other partners. In higher plants two isoforms of EIF4F have been identified, named isoform EIF4F and isoform EIF(iso)4F. Isoform EIF4F has subunits p220 and p26, whereas isoform EIF(iso)4F has subunits p82 and p28. (Microbial infection) Interacts with viral genome-linked protein (VPg); this interaction is possible in susceptible hosts but impaired in resistant plants. According to the redox status, the Cys-99-Cys-138 disulfide bridge may have a role in regulating protein function by affecting its ability to bind capped mRNA. Expressed ubiquitously in seedlings, roots, leaves, sepals, petals, anthers and dehisced pollen, with highest levels in pollen, maturing anthers and roots. Strongly expressed in susceptible plants but not in resistant ones.

The protein resides in the cytoplasm. It is found in the nucleus. Functionally, component of the protein complex eIF4F, which is involved in the recognition of the mRNA cap, ATP-dependent unwinding of 5'-terminal secondary structure and recruitment of mRNA to the ribosome. Recognizes and binds the 7-methylguanosine-containing mRNA cap during an early step in the initiation of protein synthesis and facilitates ribosome binding by inducing the unwinding of the mRNAs secondary structures. Key component of recessive resistance to potyviruses. (Microbial infection) Susceptibility host factor required for viral infection (e.g. potato virus Y (PVY) and pepper mottle virus (PepMoV)) by recruiting viral RNAs to the host ribosomal complex via an interaction with viral genome-linked protein (VPg). The polypeptide is Eukaryotic translation initiation factor isoform 4E (Nicotiana tabacum (Common tobacco)).